The sequence spans 50 residues: Large ribosomal subunit protein bL33B (50 aa).

Belongs to the bacterial ribosomal protein bL33 family.

In Mesomycoplasma hyopneumoniae (strain 7448) (Mycoplasma hyopneumoniae), this protein is Large ribosomal subunit protein bL33B.